Here is a 750-residue protein sequence, read N- to C-terminus: Penicillin-binding protein 2x (750 aa).

Residues 29–49 (LSLLSVFVFAIFLVNFAVIIG) traverse the membrane as a helical segment. The Acyl-ester intermediate role is filled by S337. PASTA domains lie at 632–691 (QQSP…ILSD) and 692–750 (KAEE…TLGD).

This sequence belongs to the transpeptidase family.

It is found in the cell membrane. Its function is as follows. A transpeptidase that forms peptide cross-links between adjacent glycan strands in cell wall peptidoglycan (PG). Part of the divisome machinery that synthesizes the septal cross wall. Beta-lactams inactivate the PBPs by acylating an essential serine residue in the active site of these proteins. This chain is Penicillin-binding protein 2x (pbpX), found in Streptococcus pneumoniae serotype 4 (strain ATCC BAA-334 / TIGR4).